Reading from the N-terminus, the 208-residue chain is LexA repressor (208 aa).

Positions 29 to 49 form a DNA-binding region, H-T-H motif; that stretch reads VREICGAVGLSSTSTVHGHIN. Catalysis depends on for autocatalytic cleavage activity residues Ser-129 and Lys-167.

This sequence belongs to the peptidase S24 family. As to quaternary structure, homodimer.

It catalyses the reaction Hydrolysis of Ala-|-Gly bond in repressor LexA.. Functionally, represses a number of genes involved in the response to DNA damage (SOS response), including recA and lexA. In the presence of single-stranded DNA, RecA interacts with LexA causing an autocatalytic cleavage which disrupts the DNA-binding part of LexA, leading to derepression of the SOS regulon and eventually DNA repair. In Limosilactobacillus fermentum (strain NBRC 3956 / LMG 18251) (Lactobacillus fermentum), this protein is LexA repressor.